The chain runs to 216 residues: 2',3'-cyclic-nucleotide 3'-phosphodiesterase (216 aa).

Histidine 39 serves as the catalytic Proton donor/acceptor. Substrate is bound at residue threonine 41. The active-site Proton donor/acceptor is the histidine 137. Residues serine 139 and tyrosine 142 each contribute to the substrate site.

Belongs to the 2H phosphoesterase superfamily. CPD1 family.

It is found in the golgi apparatus. The enzyme catalyses a nucleoside 2',3'-cyclic phosphate + H2O = a nucleoside 2'-phosphate + H(+). Its function is as follows. Involved in the metabolism of ADP-ribose 1',2'-cyclic phosphate which is produced as a consequence of tRNA splicing. The protein is 2',3'-cyclic-nucleotide 3'-phosphodiesterase (CPD1) of Eremothecium gossypii (strain ATCC 10895 / CBS 109.51 / FGSC 9923 / NRRL Y-1056) (Yeast).